We begin with the raw amino-acid sequence, 474 residues long: tRNA-2-methylthio-N(6)-dimethylallyladenosine synthase (474 aa).

The MTTase N-terminal domain maps to 3–120 (KKLHIKTWGC…LPDMIEQVRR (118 aa)). [4Fe-4S] cluster-binding residues include Cys12, Cys49, Cys83, Cys157, Cys161, and Cys164. Residues 143 to 375 (RAEGPTAFVS…QDRITQQAMR (233 aa)) enclose the Radical SAM core domain. In terms of domain architecture, TRAM spans 378 to 441 (RHMMGTVQRI…TNSLRGKFIR (64 aa)).

The protein belongs to the methylthiotransferase family. MiaB subfamily. As to quaternary structure, monomer. Requires [4Fe-4S] cluster as cofactor.

The protein localises to the cytoplasm. The catalysed reaction is N(6)-dimethylallyladenosine(37) in tRNA + (sulfur carrier)-SH + AH2 + 2 S-adenosyl-L-methionine = 2-methylsulfanyl-N(6)-dimethylallyladenosine(37) in tRNA + (sulfur carrier)-H + 5'-deoxyadenosine + L-methionine + A + S-adenosyl-L-homocysteine + 2 H(+). Functionally, catalyzes the methylthiolation of N6-(dimethylallyl)adenosine (i(6)A), leading to the formation of 2-methylthio-N6-(dimethylallyl)adenosine (ms(2)i(6)A) at position 37 in tRNAs that read codons beginning with uridine. The chain is tRNA-2-methylthio-N(6)-dimethylallyladenosine synthase from Shewanella sp. (strain MR-7).